A 240-amino-acid chain; its full sequence is Arylmalonate decarboxylase (240 aa).

It catalyses the reaction 2-aryl-2-methylmalonate + H(+) = 2-arylpropionate + CO2. This Bordetella bronchiseptica (Alcaligenes bronchisepticus) protein is Arylmalonate decarboxylase.